We begin with the raw amino-acid sequence, 301 residues long: Lipoyl synthase (301 aa).

Residues Cys50, Cys55, Cys61, Cys76, Cys80, Cys83, and Ser289 each contribute to the [4Fe-4S] cluster site. One can recognise a Radical SAM core domain in the interval 62-278 (WNHRTATFLL…RRYALERGFR (217 aa)).

Belongs to the radical SAM superfamily. Lipoyl synthase family. [4Fe-4S] cluster serves as cofactor.

The protein resides in the cytoplasm. It carries out the reaction [[Fe-S] cluster scaffold protein carrying a second [4Fe-4S](2+) cluster] + N(6)-octanoyl-L-lysyl-[protein] + 2 oxidized [2Fe-2S]-[ferredoxin] + 2 S-adenosyl-L-methionine + 4 H(+) = [[Fe-S] cluster scaffold protein] + N(6)-[(R)-dihydrolipoyl]-L-lysyl-[protein] + 4 Fe(3+) + 2 hydrogen sulfide + 2 5'-deoxyadenosine + 2 L-methionine + 2 reduced [2Fe-2S]-[ferredoxin]. It participates in protein modification; protein lipoylation via endogenous pathway; protein N(6)-(lipoyl)lysine from octanoyl-[acyl-carrier-protein]: step 2/2. Its function is as follows. Catalyzes the radical-mediated insertion of two sulfur atoms into the C-6 and C-8 positions of the octanoyl moiety bound to the lipoyl domains of lipoate-dependent enzymes, thereby converting the octanoylated domains into lipoylated derivatives. The protein is Lipoyl synthase of Roseiflexus sp. (strain RS-1).